The primary structure comprises 210 residues: Thymidylate kinase (210 aa).

10–17 is a binding site for ATP; sequence GPEGAGKS.

This sequence belongs to the thymidylate kinase family.

The enzyme catalyses dTMP + ATP = dTDP + ADP. In terms of biological role, phosphorylation of dTMP to form dTDP in both de novo and salvage pathways of dTTP synthesis. This Pseudomonas savastanoi pv. phaseolicola (strain 1448A / Race 6) (Pseudomonas syringae pv. phaseolicola (strain 1448A / Race 6)) protein is Thymidylate kinase.